A 300-amino-acid polypeptide reads, in one-letter code: Cation-efflux pump FieF (300 aa).

Helical transmembrane passes span Leu11 to Trp31, Leu40 to Val60, Leu81 to Gly101, and Pro114 to Phe134. Positions 45 and 49 each coordinate Zn(2+). Zn(2+) contacts are provided by His153 and Asp157. The next 2 membrane-spanning stretches (helical) occupy residues Ser156 to Thr176 and Phe182 to Val202.

This sequence belongs to the cation diffusion facilitator (CDF) transporter (TC 2.A.4) family. FieF subfamily. In terms of assembly, homodimer.

Its subcellular location is the cell inner membrane. It catalyses the reaction Zn(2+)(in) + H(+)(out) = Zn(2+)(out) + H(+)(in). The enzyme catalyses Cd(2+)(in) + H(+)(out) = Cd(2+)(out) + H(+)(in). The catalysed reaction is Fe(2+)(in) + H(+)(out) = Fe(2+)(out) + H(+)(in). Divalent metal cation transporter which exports Zn(2+), Cd(2+) and possibly Fe(2+). May be involved in zinc and iron detoxification by efflux. This is Cation-efflux pump FieF from Pectobacterium atrosepticum (strain SCRI 1043 / ATCC BAA-672) (Erwinia carotovora subsp. atroseptica).